We begin with the raw amino-acid sequence, 180 residues long: Ribosome-recycling factor (180 aa).

The protein belongs to the RRF family.

The protein localises to the cytoplasm. Its function is as follows. Responsible for the release of ribosomes from messenger RNA at the termination of protein biosynthesis. May increase the efficiency of translation by recycling ribosomes from one round of translation to another. The sequence is that of Ribosome-recycling factor from Chlamydia caviae (strain ATCC VR-813 / DSM 19441 / 03DC25 / GPIC) (Chlamydophila caviae).